Here is a 302-residue protein sequence, read N- to C-terminus: N-acetylmuramic acid 6-phosphate etherase (302 aa).

The region spanning 58–221 is the SIS domain; that stretch reads IFERFKKGGR…TTTLMIKLGK (164 aa). The active-site Proton donor is the glutamate 86. Glutamate 117 is an active-site residue.

The protein belongs to the GCKR-like family. MurNAc-6-P etherase subfamily. In terms of assembly, homodimer.

It catalyses the reaction N-acetyl-D-muramate 6-phosphate + H2O = N-acetyl-D-glucosamine 6-phosphate + (R)-lactate. It functions in the pathway amino-sugar metabolism; N-acetylmuramate degradation. Specifically catalyzes the cleavage of the D-lactyl ether substituent of MurNAc 6-phosphate, producing GlcNAc 6-phosphate and D-lactate. The chain is N-acetylmuramic acid 6-phosphate etherase from Mycoplasma mycoides subsp. mycoides SC (strain CCUG 32753 / NCTC 10114 / PG1).